The sequence spans 968 residues: RNA polymerase-associated protein RapA (968 aa).

One can recognise a Helicase ATP-binding domain in the interval 164–334; sequence DVGRRHAPRV…FARLRLLDPN (171 aa). 177–184 provides a ligand contact to ATP; sequence DEVGLGKT. The short motif at 280-283 is the DEAH box element; that stretch reads DEAH. Positions 490–662 constitute a Helicase C-terminal domain; that stretch reads RVEWLMGYLT…YLASPDQTEG (173 aa).

It belongs to the SNF2/RAD54 helicase family. RapA subfamily. As to quaternary structure, interacts with the RNAP. Has a higher affinity for the core RNAP than for the holoenzyme. Its ATPase activity is stimulated by binding to RNAP.

In terms of biological role, transcription regulator that activates transcription by stimulating RNA polymerase (RNAP) recycling in case of stress conditions such as supercoiled DNA or high salt concentrations. Probably acts by releasing the RNAP, when it is trapped or immobilized on tightly supercoiled DNA. Does not activate transcription on linear DNA. Probably not involved in DNA repair. The chain is RNA polymerase-associated protein RapA from Escherichia fergusonii (strain ATCC 35469 / DSM 13698 / CCUG 18766 / IAM 14443 / JCM 21226 / LMG 7866 / NBRC 102419 / NCTC 12128 / CDC 0568-73).